The primary structure comprises 300 residues: Homoserine kinase (300 aa).

86 to 96 (PVARGLGSSAT) is an ATP binding site.

It belongs to the GHMP kinase family. Homoserine kinase subfamily.

The protein localises to the cytoplasm. It carries out the reaction L-homoserine + ATP = O-phospho-L-homoserine + ADP + H(+). Its pathway is amino-acid biosynthesis; L-threonine biosynthesis; L-threonine from L-aspartate: step 4/5. In terms of biological role, catalyzes the ATP-dependent phosphorylation of L-homoserine to L-homoserine phosphate. The sequence is that of Homoserine kinase from Persephonella marina (strain DSM 14350 / EX-H1).